We begin with the raw amino-acid sequence, 306 residues long: Erythromycin 3''-O-methyltransferase (306 aa).

Positions 157 and 162 each coordinate S-adenosyl-L-methionine.

This sequence belongs to the methyltransferase superfamily.

The enzyme catalyses erythromycin C + S-adenosyl-L-methionine = erythromycin A + S-adenosyl-L-homocysteine + H(+). The catalysed reaction is erythromycin D + S-adenosyl-L-methionine = erythromycin B + S-adenosyl-L-homocysteine + H(+). The protein operates within antibiotic biosynthesis; erythromycin biosynthesis. S-adenosyl-L-methionine-dependent O-methyltransferase that catalyzes the last step in the erythromycin biosynthesis pathway. Methylates the position 3 of the mycarosyl moiety of erythromycin C, forming the most active form of the antibiotic, erythromycin A. Can also methylate the precursor erythromycin D, forming erythromycin B. The sequence is that of Erythromycin 3''-O-methyltransferase (eryG) from Saccharopolyspora erythraea (strain ATCC 11635 / DSM 40517 / JCM 4748 / NBRC 13426 / NCIMB 8594 / NRRL 2338).